Here is a 27-residue protein sequence, read N- to C-terminus: Conotoxin Lo6/7b (27 aa).

3 disulfide bridges follow: Cys2–Cys16, Cys9–Cys19, and Cys15–Cys26. Tyr27 bears the Tyrosine amide mark.

In terms of tissue distribution, expressed by the venom duct.

The protein localises to the secreted. Functionally, 1 uM of this toxin does not show any effect on voltage-gated sodium and potassium channels. Does not show antibacterial activity on both Gram-negative and Gram-positive bacteria. The protein is Conotoxin Lo6/7b of Conasprella longurionis (Cone snail).